An 83-amino-acid polypeptide reads, in one-letter code: MEGNIQLALICVGAALSIGLAGLGAGIGIGSVGQGACMGLARNPEVQPKLMVFMILGMALAESIAIYGLVISLILLYANPLLG.

2 helical membrane-spanning segments follow: residues 9–29 (LICV…GIGI) and 51–71 (MVFM…GLVI).

It belongs to the ATPase C chain family. F-type ATPases have 2 components, F(1) - the catalytic core - and F(0) - the membrane proton channel. F(1) has five subunits: alpha(3), beta(3), gamma(1), delta(1), epsilon(1). F(0) has three main subunits: a(1), b(2) and c(10-14). The alpha and beta chains form an alternating ring which encloses part of the gamma chain. F(1) is attached to F(0) by a central stalk formed by the gamma and epsilon chains, while a peripheral stalk is formed by the delta and b chains.

Its subcellular location is the cell inner membrane. Its function is as follows. F(1)F(0) ATP synthase produces ATP from ADP in the presence of a proton or sodium gradient. F-type ATPases consist of two structural domains, F(1) containing the extramembraneous catalytic core and F(0) containing the membrane proton channel, linked together by a central stalk and a peripheral stalk. During catalysis, ATP synthesis in the catalytic domain of F(1) is coupled via a rotary mechanism of the central stalk subunits to proton translocation. In terms of biological role, key component of the F(0) channel; it plays a direct role in translocation across the membrane. A homomeric c-ring of between 10-14 subunits forms the central stalk rotor element with the F(1) delta and epsilon subunits. The sequence is that of ATP synthase subunit c from Desulfotalea psychrophila (strain LSv54 / DSM 12343).